Reading from the N-terminus, the 220-residue chain is MNVQIEESWKTHLQPEFEKDYFRTLTEFVKSEYSQYQIFPPGKLIFNAFNLCPFDKVKVVIIGQDPYHGPGQAHGLCFSVNDGVPFPPSLVNIFKEIKADIGTDAPTTGNLTRWAEQGVLLLNATLTVRAHQAGSHQNRGWEAFTDAAIRALAEEREHLVFILWGAYAQRKGAFIDRNKHLVLSSAHPSPLSAYNGFFGNKHFSRANDYLKANGETEIIW.

The active-site Proton acceptor is Asp-65.

This sequence belongs to the uracil-DNA glycosylase (UDG) superfamily. UNG family.

It is found in the cytoplasm. The catalysed reaction is Hydrolyzes single-stranded DNA or mismatched double-stranded DNA and polynucleotides, releasing free uracil.. Functionally, excises uracil residues from the DNA which can arise as a result of misincorporation of dUMP residues by DNA polymerase or due to deamination of cytosine. The chain is Uracil-DNA glycosylase from Bacteroides thetaiotaomicron (strain ATCC 29148 / DSM 2079 / JCM 5827 / CCUG 10774 / NCTC 10582 / VPI-5482 / E50).